We begin with the raw amino-acid sequence, 187 residues long: Large ribosomal subunit protein uL22 (187 aa).

Positions 161-187 (APTDDAPAKKKLSKKKLARQKEKMMRE) are disordered. Residues 169 to 178 (KKKLSKKKLA) are compositionally biased toward basic residues.

This sequence belongs to the universal ribosomal protein uL22 family.

The protein is Large ribosomal subunit protein uL22 (RpL17) of Bombyx mori (Silk moth).